The chain runs to 379 residues: 1-deoxy-D-xylulose 5-phosphate reductoisomerase (379 aa).

Residues Thr10, Gly11, Ser12, Val13, and Asn121 each contribute to the NADPH site. A 1-deoxy-D-xylulose 5-phosphate-binding site is contributed by Lys122. Glu123 is an NADPH binding site. Asp147 contributes to the Mn(2+) binding site. Residues Ser148, Glu149, Ser173, and His196 each contribute to the 1-deoxy-D-xylulose 5-phosphate site. Residue Glu149 coordinates Mn(2+). Gly202 provides a ligand contact to NADPH. 4 residues coordinate 1-deoxy-D-xylulose 5-phosphate: Ser209, Asn214, Lys215, and Glu218. Mn(2+) is bound at residue Glu218.

Belongs to the DXR family. The cofactor is Mg(2+). Mn(2+) serves as cofactor.

It catalyses the reaction 2-C-methyl-D-erythritol 4-phosphate + NADP(+) = 1-deoxy-D-xylulose 5-phosphate + NADPH + H(+). It functions in the pathway isoprenoid biosynthesis; isopentenyl diphosphate biosynthesis via DXP pathway; isopentenyl diphosphate from 1-deoxy-D-xylulose 5-phosphate: step 1/6. Functionally, catalyzes the NADPH-dependent rearrangement and reduction of 1-deoxy-D-xylulose-5-phosphate (DXP) to 2-C-methyl-D-erythritol 4-phosphate (MEP). This chain is 1-deoxy-D-xylulose 5-phosphate reductoisomerase, found in Chlamydia abortus (strain DSM 27085 / S26/3) (Chlamydophila abortus).